A 274-amino-acid polypeptide reads, in one-letter code: 23S rRNA (adenosine(1067)-2'-O)-methyltransferase (274 aa).

Residues R165, L195, G218 to E220, I238 to M240, and L247 to S252 contribute to the S-adenosyl-L-methionine site.

The protein belongs to the class IV-like SAM-binding methyltransferase superfamily. RNA methyltransferase TsnR/AvirB family. As to quaternary structure, homodimer.

It catalyses the reaction adenosine(1067) in 23S rRNA + S-adenosyl-L-methionine = 2'-O-methyladenosine(1067) in 23S rRNA + S-adenosyl-L-homocysteine + H(+). Its function is as follows. Specifically methylates the adenosine-1067 in 23S ribosomal RNA. Confers resistance to antibiotic nosiheptide. This chain is 23S rRNA (adenosine(1067)-2'-O)-methyltransferase, found in Streptomyces actuosus.